Reading from the N-terminus, the 122-residue chain is Large ribosomal subunit protein uL14 (122 aa).

This sequence belongs to the universal ribosomal protein uL14 family. In terms of assembly, part of the 50S ribosomal subunit. Forms a cluster with proteins L3 and L19. In the 70S ribosome, L14 and L19 interact and together make contacts with the 16S rRNA in bridges B5 and B8.

In terms of biological role, binds to 23S rRNA. Forms part of two intersubunit bridges in the 70S ribosome. The sequence is that of Large ribosomal subunit protein uL14 from Buchnera aphidicola subsp. Acyrthosiphon pisum (strain 5A).